Reading from the N-terminus, the 751-residue chain is 1,3-beta-galactosyl-N-acetylhexosamine phosphorylase (751 aa).

Asp-313 (proton donor) is an active-site residue.

Belongs to the glycoside hydrolase 112 family. Homodimer.

It carries out the reaction beta-D-galactosyl-(1-&gt;3)-N-acetyl-D-glucosamine + phosphate = alpha-D-galactose 1-phosphate + N-acetyl-D-glucosamine. Reversibly phosphorolyzes lacto-N-biose to Gal1-P and N-acetylglucosamine (GlcNAc) and galacto-N-biose to Gal1-P and N-acetylgalactosamine (GalNAc). Involved in the lacto-N-biose I/galacto-N-biose (LNB/GNB) degradation pathway, which is important for host intestinal colonization by bifidobacteria. This chain is 1,3-beta-galactosyl-N-acetylhexosamine phosphorylase (lnpA), found in Bifidobacterium longum subsp. longum (strain ATCC 15707 / DSM 20219 / JCM 1217 / NCTC 11818 / E194b).